The chain runs to 431 residues: Histidinol dehydrogenase (431 aa).

Positions 130, 191, and 214 each coordinate NAD(+). The substrate site is built by Ser-237, Gln-259, and His-262. Residues Gln-259 and His-262 each coordinate Zn(2+). Active-site proton acceptor residues include Glu-327 and His-328. Positions 328, 361, 415, and 420 each coordinate substrate. Asp-361 is a binding site for Zn(2+). Residue His-420 coordinates Zn(2+).

It belongs to the histidinol dehydrogenase family. It depends on Zn(2+) as a cofactor.

The catalysed reaction is L-histidinol + 2 NAD(+) + H2O = L-histidine + 2 NADH + 3 H(+). It functions in the pathway amino-acid biosynthesis; L-histidine biosynthesis; L-histidine from 5-phospho-alpha-D-ribose 1-diphosphate: step 9/9. Its function is as follows. Catalyzes the sequential NAD-dependent oxidations of L-histidinol to L-histidinaldehyde and then to L-histidine. This chain is Histidinol dehydrogenase, found in Bradyrhizobium diazoefficiens (strain JCM 10833 / BCRC 13528 / IAM 13628 / NBRC 14792 / USDA 110).